The primary structure comprises 82 residues: Large ribosomal subunit protein bL31B (82 aa).

Belongs to the bacterial ribosomal protein bL31 family. Type B subfamily. Part of the 50S ribosomal subunit.

The sequence is that of Large ribosomal subunit protein bL31B from Bacillus velezensis (strain DSM 23117 / BGSC 10A6 / LMG 26770 / FZB42) (Bacillus amyloliquefaciens subsp. plantarum).